Here is a 156-residue protein sequence, read N- to C-terminus: U4/U6.U5 small nuclear ribonucleoprotein 27 kDa protein (156 aa).

Positions 1–98 (MGRSRSRSPE…IAAEDLEGKT (98 aa)) are disordered. Residues 13 to 59 (RERRRSRSASRERERRRRERSRSRERRRSRSRSPHRRRSRSPRRHRS) are compositionally biased toward basic residues. The segment covering 66-98 (RLKDRRDDDKKDSKESKGAKERQIAAEDLEGKT) has biased composition (basic and acidic residues).

Belongs to the SNUT3 family. Part of a tri-snRNP complex.

The protein localises to the nucleus. In terms of biological role, may play a role in mRNA splicing. In Xenopus tropicalis (Western clawed frog), this protein is U4/U6.U5 small nuclear ribonucleoprotein 27 kDa protein (snrnp27).